We begin with the raw amino-acid sequence, 262 residues long: Hydroxyethylthiazole kinase (262 aa).

Met50 provides a ligand contact to substrate. ATP contacts are provided by Arg125 and Thr171. Gly198 contributes to the substrate binding site.

This sequence belongs to the Thz kinase family. Mg(2+) serves as cofactor.

It catalyses the reaction 5-(2-hydroxyethyl)-4-methylthiazole + ATP = 4-methyl-5-(2-phosphooxyethyl)-thiazole + ADP + H(+). The protein operates within cofactor biosynthesis; thiamine diphosphate biosynthesis; 4-methyl-5-(2-phosphoethyl)-thiazole from 5-(2-hydroxyethyl)-4-methylthiazole: step 1/1. In terms of biological role, catalyzes the phosphorylation of the hydroxyl group of 4-methyl-5-beta-hydroxyethylthiazole (THZ). This Escherichia coli (strain K12 / MC4100 / BW2952) protein is Hydroxyethylthiazole kinase.